The following is a 351-amino-acid chain: Ion-translocating oxidoreductase complex subunit D (351 aa).

The next 4 membrane-spanning stretches (helical) occupy residues 18 to 38 (IMLL…YFFG), 40 to 60 (GSLI…GAVL), 87 to 107 (LPPL…IVIA), and 121 to 141 (PAMV…TSWL). Thr185 carries the FMN phosphoryl threonine modification. 5 helical membrane passes run 211 to 231 (VLAG…GLLL), 241 to 261 (IPVS…MIAP), 264 to 284 (FASP…FFIA), 298 to 318 (LIFG…GGYP), and 321 to 341 (VAFA…YTQP).

It belongs to the NqrB/RnfD family. In terms of assembly, the complex is composed of six subunits: RnfA, RnfB, RnfC, RnfD, RnfE and RnfG. FMN serves as cofactor.

The protein resides in the cell inner membrane. Part of a membrane-bound complex that couples electron transfer with translocation of ions across the membrane. This chain is Ion-translocating oxidoreductase complex subunit D, found in Yersinia pestis.